Reading from the N-terminus, the 584-residue chain is DNA mismatch repair protein MutL (584 aa).

Belongs to the DNA mismatch repair MutL/HexB family.

Its function is as follows. This protein is involved in the repair of mismatches in DNA. It is required for dam-dependent methyl-directed DNA mismatch repair. May act as a 'molecular matchmaker', a protein that promotes the formation of a stable complex between two or more DNA-binding proteins in an ATP-dependent manner without itself being part of a final effector complex. This Buchnera aphidicola subsp. Acyrthosiphon pisum (strain 5A) protein is DNA mismatch repair protein MutL.